A 146-amino-acid polypeptide reads, in one-letter code: MTKKIEEKIEGVIESLGYLLYDVSLVKENEQHVLRVSLKNPNGAVSLDICQQVSEIISPLLDVCDFIQDAYILEVSSMGLERTLKTPKHFKLSLGEKVEVKLINKESFQAVLKDANDLSADFELDNHAIKSVEYKDLKKVKTLFEW.

This sequence belongs to the RimP family.

The protein localises to the cytoplasm. Its function is as follows. Required for maturation of 30S ribosomal subunits. The protein is Ribosome maturation factor RimP of Helicobacter pylori (strain J99 / ATCC 700824) (Campylobacter pylori J99).